Reading from the N-terminus, the 175-residue chain is Phosphatidylglycerol/phosphatidylinositol transfer protein (175 aa).

A signal peptide spans 1–21 (MKFLSTAAALLVCLAPVSTTA). The propeptide occupies 22–37 (RSLDFFKSSQSPIQAQ).

The protein belongs to the NPC2 family. As to quaternary structure, monomer.

The protein localises to the cytoplasm. It is found in the cytoplasmic vesicle. Its subcellular location is the golgi apparatus. In terms of biological role, catalyzes the intermembrane transfer of phosphatidylglycerol and phosphatidylinositol. This is Phosphatidylglycerol/phosphatidylinositol transfer protein (pltp) from Aspergillus oryzae (strain ATCC 42149 / RIB 40) (Yellow koji mold).